A 3630-amino-acid chain; its full sequence is Trimeric autotransporter adhesin AtaA (3630 aa).

The first 23 residues, 1–23 (MNKIYKVIWNATLLAWVAVSELA), serve as a signal peptide directing secretion. The segment at 24-3487 (KGKTKSTTSK…TNQAVVNYLG (3464 aa)) is surface exposed passenger domain. An N-terminal YadA-like head region spans residues 108-315 (SIAIGENAQG…ASDAVTVAQL (208 aa)). Positions 316–2904 (DKAYDDTNGR…GRAATEEQLK (2589 aa)) are N-terminal stalk. Residues 2905 to 3169 (AVITSNITEV…DSDAVNVAQL (265 aa)) are C-terminal YadA-like head. The interval 3170–3561 (KAVGNQVVTT…DVEKKANAGI (392 aa)) is C-terminal stalk. The tract at residues 3539 to 3574 (LDNAFRITNNRIDDVEKKANAGIAAAMALESAPYVP) is outer membrane translocation of the passenger domain. 4 consecutive transmembrane segments (beta stranded) span residues 3575 to 3585 (GKYTYAAGAAY), 3589 to 3599 (ENAVGVTLRKT), 3608 to 3614 (TGGVAAA), and 3618 to 3629 (DASVRIGISGVI). Positions 3575–3630 (GKYTYAAGAAYHGGENAVGVTLRKTADNGRWSITGGVAAASQGDASVRIGISGVID) are translocator domain.

The protein belongs to the autotransporter-2 (AT-2) (TC 1.B.40) family. As to quaternary structure, homotrimer. Interacts with TpgA.

Its subcellular location is the cell surface. The protein resides in the cell outer membrane. Responsible for autoagglutination, and for adhesion to abiotic and biotic surfaces such as polystyrene (PS), type I collagen, polypropylene (PP), polyvinylchloride (PVC), glass and stainless steel (SS). Adhesion is much stronger than that mediated by Yersinia YadA in a comparative assay. Confers autoagglutination and binding to PS, type I collagen, PP, PVC, glass and SS upon expression in Acinetobacter baylyi strain ADP1. Involved in rapid, irreversible adherence to polyurethane. Forms an unusual biofilm. An extended, surface exposed fiber binds to quartz crystals, PS and glass. It can be removed by washing in distilled water. This is Trimeric autotransporter adhesin AtaA from Acinetobacter sp. (strain Tol 5).